We begin with the raw amino-acid sequence, 355 residues long: S-adenosylmethionine:tRNA ribosyltransferase-isomerase (355 aa).

Belongs to the QueA family. As to quaternary structure, monomer.

The protein resides in the cytoplasm. It catalyses the reaction 7-aminomethyl-7-carbaguanosine(34) in tRNA + S-adenosyl-L-methionine = epoxyqueuosine(34) in tRNA + adenine + L-methionine + 2 H(+). Its pathway is tRNA modification; tRNA-queuosine biosynthesis. Its function is as follows. Transfers and isomerizes the ribose moiety from AdoMet to the 7-aminomethyl group of 7-deazaguanine (preQ1-tRNA) to give epoxyqueuosine (oQ-tRNA). This Pectobacterium carotovorum subsp. carotovorum (strain PC1) protein is S-adenosylmethionine:tRNA ribosyltransferase-isomerase.